The following is a 1262-amino-acid chain: Separin homolog sep-1 (1262 aa).

The 95-residue stretch at 957-1051 (VQNAYYILDP…SVRTIPQALG (95 aa)) folds into the Peptidase C50 domain. Cys-1040 is an active-site residue. A disordered region spans residues 1147 to 1262 (KDQRNLPQTP…ARTPSRSRNL (116 aa)). Polar residues-rich tracts occupy residues 1151–1162 (NLPQTPKTSART) and 1177–1197 (FVTS…NKSP). Low complexity predominate over residues 1243 to 1262 (TPTTRTTRSSARTPSRSRNL).

In terms of assembly, forms a complex with securin-like protein ify-1 (via C-terminus). Interaction with ify-1 stabilizes sep-1. Also maintains the complex in the cytoplasm during interphase and recruits it to chromosomes during the first meiotic division. As to expression, expressed in oocytes. Expressed in male germline. Expressed in spermatocytes but undetectable in spermatids (at protein level).

The protein localises to the cytoplasm. Its subcellular location is the chromosome. The protein resides in the cytoplasmic granule. It localises to the cytoskeleton. It is found in the microtubule organizing center. The protein localises to the centrosome. Its subcellular location is the spindle. The protein resides in the cleavage furrow. It localises to the midbody. The enzyme catalyses All bonds known to be hydrolyzed by this endopeptidase have arginine in P1 and an acidic residue in P4. P6 is often occupied by an acidic residue or by a hydroxy-amino-acid residue, the phosphorylation of which enhances cleavage.. Its activity is regulated as follows. Probably maintained in an inactive state via its interaction with securin ify-1 which acts as a pseudosubstrate thereby blocking access to the catalytic site. Upon ify-1 degradation at the onset of anaphase, sep-1 is likely to become active. In addition, interaction with ify-1 stabilizes sep-1. In terms of biological role, cysteine protease, which plays a central role in homologous chromosome separation during meiosis I and in sister chromatid separation during embryonic mitosis. Promotes chromosome/sister chromatid segregation by cleaving the scc-1 (mitosis) and rec-8 (meiosis) subunits of the cohesin complex at the onset of anaphase. May cleave histone H3-like protein cpar-1 during meiosis I metaphase-anaphase transition. Promotes cortical granule exocytosis after oocyte fertilization during the first meiotic anaphase. Essential for embryonic cytokinesis by regulating rab-11-positive vesicle trafficking at the plasma membrane at the cleavage furrow and midbody. Regulates centriole segregation during spermatocyte meiosis. Required for embryonic anterior-posterior axis formation. In Caenorhabditis elegans, this protein is Separin homolog sep-1.